A 368-amino-acid chain; its full sequence is Interferon-stimulated 20 kDa exonuclease-like 2 (368 aa).

Disordered stretches follow at residues 33–107 (FLEQ…APSK) and 127–187 (PKTK…PTVP). A compositionally biased stretch (polar residues) spans 42–54 (KKNQPPNKVSKLN). Basic and acidic residues predominate over residues 77 to 96 (KKKEAAASKRDSERSKDKKA). A compositionally biased stretch (basic residues) spans 131-145 (STQKKGSKKKSLKKK). Residues 194-368 (MVAIDCEMVG…QHLAQNPPEN (175 aa)) form the Exonuclease domain.

It localises to the nucleus. The protein resides in the nucleolus. Its function is as follows. 3'-&gt; 5'-exoribonuclease involved in ribosome biogenesis in the processing of the 12S pre-rRNA. Displays a strong specificity for a 3'-end containing a free hydroxyl group. This Mus musculus (Mouse) protein is Interferon-stimulated 20 kDa exonuclease-like 2 (Isg20l2).